The sequence spans 293 residues: Elongation factor Ts (293 aa).

The tract at residues 81–84 is involved in Mg(2+) ion dislocation from EF-Tu; sequence TDFV.

It belongs to the EF-Ts family.

It localises to the cytoplasm. Associates with the EF-Tu.GDP complex and induces the exchange of GDP to GTP. It remains bound to the aminoacyl-tRNA.EF-Tu.GTP complex up to the GTP hydrolysis stage on the ribosome. The protein is Elongation factor Ts of Thioalkalivibrio sulfidiphilus (strain HL-EbGR7).